The primary structure comprises 494 residues: Probable malate:quinone oxidoreductase 3 (494 aa).

This sequence belongs to the MQO family. FAD serves as cofactor.

It catalyses the reaction (S)-malate + a quinone = a quinol + oxaloacetate. Its pathway is carbohydrate metabolism; tricarboxylic acid cycle; oxaloacetate from (S)-malate (quinone route): step 1/1. This is Probable malate:quinone oxidoreductase 3 from Staphylococcus epidermidis (strain ATCC 12228 / FDA PCI 1200).